The sequence spans 90 residues: DNA-binding protein HU (90 aa).

It belongs to the bacterial histone-like protein family. As to quaternary structure, homodimer.

Functionally, histone-like DNA-binding protein which is capable of wrapping DNA to stabilize it, and thus to prevent its denaturation under extreme environmental conditions. This Haemophilus influenzae (strain ATCC 51907 / DSM 11121 / KW20 / Rd) protein is DNA-binding protein HU (hup).